We begin with the raw amino-acid sequence, 244 residues long: UDP-2,3-diacylglucosamine hydrolase (244 aa).

Mn(2+) is bound by residues aspartate 8, histidine 10, aspartate 41, asparagine 79, and histidine 114. Substrate is bound at residue 79-80; sequence NR. Residues aspartate 122, serine 160, asparagine 164, lysine 167, and histidine 195 each contribute to the substrate site. Mn(2+)-binding residues include histidine 195 and histidine 197.

Belongs to the LpxH family. It depends on Mn(2+) as a cofactor.

It localises to the cell inner membrane. The catalysed reaction is UDP-2-N,3-O-bis[(3R)-3-hydroxytetradecanoyl]-alpha-D-glucosamine + H2O = 2-N,3-O-bis[(3R)-3-hydroxytetradecanoyl]-alpha-D-glucosaminyl 1-phosphate + UMP + 2 H(+). It functions in the pathway glycolipid biosynthesis; lipid IV(A) biosynthesis; lipid IV(A) from (3R)-3-hydroxytetradecanoyl-[acyl-carrier-protein] and UDP-N-acetyl-alpha-D-glucosamine: step 4/6. Its function is as follows. Hydrolyzes the pyrophosphate bond of UDP-2,3-diacylglucosamine to yield 2,3-diacylglucosamine 1-phosphate (lipid X) and UMP by catalyzing the attack of water at the alpha-P atom. Involved in the biosynthesis of lipid A, a phosphorylated glycolipid that anchors the lipopolysaccharide to the outer membrane of the cell. The polypeptide is UDP-2,3-diacylglucosamine hydrolase (Marinobacter nauticus (strain ATCC 700491 / DSM 11845 / VT8) (Marinobacter aquaeolei)).